The sequence spans 682 residues: Connectin (682 aa).

A signal peptide spans 1–24 (MATLADSAICFLLLSLLLIGACLV). The tract at residues 29–54 (GRAKDDRRTRGRGSSSGVLSSSSSSS) is disordered. Positions 40–54 (RGSSSGVLSSSSSSS) are enriched in low complexity. LRR repeat units follow at residues 149–172 (LREL…IIEP), 173–196 (LKNL…AFAN), 199–220 (FLER…AFAN), 223–244 (RLRE…AFRN), 247–268 (LCER…LFAD), 271–292 (RLTF…IFRG), 295–316 (NLNV…VFAE), 319–342 (SLSE…DGLN), 343–364 (TLKT…LLRG), 367–388 (ALLS…TFQP), and 389–404 (IMDN…LVSD). An LRRCT domain is found at 405–462 (NKFICDCRLQWIFELKNRTRHLQLRDSLEDLHCTLQEPKLSHFVDPVPPTILDVLNIG). The interval 503 to 536 (RQALRGQRQFASSAENVVESKMRRRRKRQEEVKE) is disordered. The GPI-anchor amidated alanine moiety is linked to residue Ala-658. Positions 659-682 (GANSLAQGMTIIVSLVALMMISRG) are cleaved as a propeptide — removed in mature form.

As to expression, predominantly expressed in abdominal and thoracic segment muscle and motorneuron cells.

It is found in the cell membrane. Its function is as follows. Cell adhesion protein involved in target recognition during neuromuscular development. Mediates homophilic cellular adhesion. The polypeptide is Connectin (Con) (Drosophila melanogaster (Fruit fly)).